The following is a 417-amino-acid chain: Tyrosine--tRNA ligase (417 aa).

Tyr39 provides a ligand contact to L-tyrosine. A 'HIGH' region motif is present at residues 44–53; the sequence is PTAPSLHAGG. The L-tyrosine site is built by Tyr176 and Gln180. Residues 236–240 carry the 'KMSKS' region motif; that stretch reads KMGKS. Lys239 lines the ATP pocket. The 68-residue stretch at 350-417 folds into the S4 RNA-binding domain; the sequence is IGVLALMVLA…KKRHVLIRPA (68 aa).

The protein belongs to the class-I aminoacyl-tRNA synthetase family. TyrS type 1 subfamily. Homodimer.

It localises to the cytoplasm. It carries out the reaction tRNA(Tyr) + L-tyrosine + ATP = L-tyrosyl-tRNA(Tyr) + AMP + diphosphate + H(+). Catalyzes the attachment of tyrosine to tRNA(Tyr) in a two-step reaction: tyrosine is first activated by ATP to form Tyr-AMP and then transferred to the acceptor end of tRNA(Tyr). In Brucella abortus (strain 2308), this protein is Tyrosine--tRNA ligase.